A 523-amino-acid chain; its full sequence is 2,3-bisphosphoglycerate-independent phosphoglycerate mutase (523 aa).

Mn(2+) contacts are provided by aspartate 13 and serine 63. The Phosphoserine intermediate role is filled by serine 63. Substrate-binding positions include histidine 124, arginine 156–aspartate 157, arginine 188, arginine 194, arginine 268–arginine 271, and lysine 341. Positions 408, 412, 449, 450, and 467 each coordinate Mn(2+).

It belongs to the BPG-independent phosphoglycerate mutase family. As to quaternary structure, monomer. Requires Mn(2+) as cofactor.

The enzyme catalyses (2R)-2-phosphoglycerate = (2R)-3-phosphoglycerate. The protein operates within carbohydrate degradation; glycolysis; pyruvate from D-glyceraldehyde 3-phosphate: step 3/5. Its function is as follows. Catalyzes the interconversion of 2-phosphoglycerate and 3-phosphoglycerate. The chain is 2,3-bisphosphoglycerate-independent phosphoglycerate mutase from Salinibacter ruber (strain DSM 13855 / M31).